The following is a 56-amino-acid chain: UPF0339 protein NMA1193/NMA1859 (56 aa).

It belongs to the UPF0339 family.

In Neisseria meningitidis serogroup A / serotype 4A (strain DSM 15465 / Z2491), this protein is UPF0339 protein NMA1193/NMA1859.